The primary structure comprises 56 residues: Ferredoxin (56 aa).

4Fe-4S ferredoxin-type domains are found at residues 2–28 and 29–56; these read AYKI…SQGD and TQFV…PVQE. Residues cysteine 9, cysteine 12, cysteine 15, cysteine 19, cysteine 38, cysteine 41, cysteine 44, and cysteine 48 each coordinate [4Fe-4S] cluster.

[4Fe-4S] cluster serves as cofactor.

In terms of biological role, ferredoxins are iron-sulfur proteins that transfer electrons in a wide variety of metabolic reactions. This Clostridium perfringens (strain 13 / Type A) protein is Ferredoxin (fer).